The following is a 205-amino-acid chain: Probable GTP-binding protein EngB (205 aa).

The 175-residue stretch at 22 to 196 folds into the EngB-type G domain; it reads NLPEVAFVGR…LKVLDEFIHK (175 aa). Residues 30-37, 57-61, 76-79, 143-146, and 175-177 each bind GTP; these read GRSNVGKS, GRTQL, DLPG, TKVD, and FSA. Positions 37 and 59 each coordinate Mg(2+).

Belongs to the TRAFAC class TrmE-Era-EngA-EngB-Septin-like GTPase superfamily. EngB GTPase family. The cofactor is Mg(2+).

Functionally, necessary for normal cell division and for the maintenance of normal septation. The sequence is that of Probable GTP-binding protein EngB from Desulforamulus reducens (strain ATCC BAA-1160 / DSM 100696 / MI-1) (Desulfotomaculum reducens).